A 627-amino-acid chain; its full sequence is ATP-dependent zinc metalloprotease FtsH 2 (627 aa).

Over 1–7 (MKFSWRT) the chain is Cytoplasmic. The helical transmembrane segment at 8–28 (ALLWSLPLLVVGFFFWQGSFG) threads the bilayer. Over 29 to 117 (GADANLGSNT…SHPVRNNGMV (89 aa)) the chain is Lumenal. The chain crosses the membrane as a helical span at residues 118–138 (WGFVGNLIFPVLLIASLFFLF). At 139-627 (RRSSNMPGGP…PVKEQLIPQL (489 aa)) the chain is on the cytoplasmic side. Residue 212-219 (GPPGTGKT) coordinates ATP. Histidine 433 provides a ligand contact to Zn(2+). The active site involves glutamate 434. The Zn(2+) site is built by histidine 437 and aspartate 511.

This sequence in the central section; belongs to the AAA ATPase family. It in the C-terminal section; belongs to the peptidase M41 family. In terms of assembly, homohexamer (Potential). Part of a large (&gt;500 kDa) complex that includes FtsH3 and PSII. Coimmunoprecipitates with YidC. Requires Zn(2+) as cofactor.

The protein localises to the cellular thylakoid membrane. Acts as a processive, ATP-dependent zinc metallopeptidase for both cytoplasmic and membrane proteins. Plays a role in the quality control of integral membrane proteins. Functionally, plays a role in the selective replacement of photosystem II (PSII) protein D1 in the PSII repair cycle following visible-light and UV-B induced damage. If damaged D1 is not removed then new D1 cannot be inserted to restore the PSII reaction center. Seems to also degrade damaged and/or unassembled PSII proteins D2 and PsbB (CP47). May recognize D1 via its first 20 amino acids, as deletion of these prevents the PSII repair cycle. Also seems to degrade cytoplasmic GGPS, glucosylglycerol-phosphate synthase. The protein is ATP-dependent zinc metalloprotease FtsH 2 (ftsH2) of Synechocystis sp. (strain ATCC 27184 / PCC 6803 / Kazusa).